The following is a 154-amino-acid chain: Phosphopantetheine adenylyltransferase (154 aa).

Substrate is bound at residue T10. ATP contacts are provided by residues 10–11 (TF) and H18. The substrate site is built by K42, L74, and R88. Residues 89 to 91 (GLR), E99, and 124 to 130 (NAFISSS) each bind ATP.

Belongs to the bacterial CoaD family. As to quaternary structure, homohexamer. It depends on Mg(2+) as a cofactor.

The protein localises to the cytoplasm. It catalyses the reaction (R)-4'-phosphopantetheine + ATP + H(+) = 3'-dephospho-CoA + diphosphate. It participates in cofactor biosynthesis; coenzyme A biosynthesis; CoA from (R)-pantothenate: step 4/5. Functionally, reversibly transfers an adenylyl group from ATP to 4'-phosphopantetheine, yielding dephospho-CoA (dPCoA) and pyrophosphate. This chain is Phosphopantetheine adenylyltransferase, found in Nautilia profundicola (strain ATCC BAA-1463 / DSM 18972 / AmH).